Here is a 379-residue protein sequence, read N- to C-terminus: Guanine nucleotide-binding protein subunit alpha-12 (379 aa).

Residue Cys-11 is the site of S-palmitoyl cysteine attachment. Residues 54–379 form the G-alpha domain; sequence RLVKILLLGA…QENLKDIMLQ (326 aa). A G1 motif region spans residues 57-70; sequence KILLLGAGESGKST. GTP-binding positions include 65-70 and 200-203; these read ESGKST and LLAR. Ser-69 provides a ligand contact to Mg(2+). Residues 198–206 form a G2 motif region; sequence DILLARKAT. Thr-206 is a binding site for Mg(2+). Thr-206 bears the Phosphothreonine mark. Residues 221–230 are G3 motif; sequence FKMVDVGGQR. The tract at residues 290–297 is G4 motif; sequence ILFLNKMD. GTP-binding positions include 294–297 and Ala-351; that span reads NKMD. Residues 349-354 form a G5 motif region; sequence TTAIDT.

The protein belongs to the G-alpha family. G(12) subfamily. As to quaternary structure, g proteins are composed of 3 units; alpha, beta and gamma. The alpha chain contains the guanine nucleotide binding site. Interacts with UBXD5. Interacts (in GTP-bound form) with PPP5C (via TPR repeats); activates PPP5C phosphatase activity and translocates PPP5C to the cell membrane. Interacts with RGS22. Interacts (via N-terminus) with NAPA; the interaction promotes CDH5 localization to plasma membrane. Interacts with CTNND1 (via N-terminus); the interaction regulates CDH1-mediated cell-cell adhesion. Interacts with PPP2R1A; the interaction promotes protein phosphatase 2A activation causing dephosphorylation of MAPT. Interacts (in GTP-bound form) with ARHGEF1. Interacts (in GTP-bound form) with ARHGEF11 (via RGS domain). Interacts (in GTP-bound form) with ARHGEF12 (via RGS domain).

The protein localises to the cell membrane. The protein resides in the lateral cell membrane. Its subcellular location is the cytoplasm. Its function is as follows. Guanine nucleotide-binding proteins (G proteins) are involved as modulators or transducers in various transmembrane signaling systems. Activates effector molecule RhoA by binding and activating RhoGEFs (ARHGEF12/LARG). GNA12-dependent Rho signaling subsequently regulates transcription factor AP-1 (activating protein-1). GNA12-dependent Rho signaling also regulates protein phosphatese 2A activation causing dephosphorylation of its target proteins. Promotes tumor cell invasion and metastasis by activating RhoA/ROCK signaling pathway and up-regulating pro-inflammatory cytokine production. Inhibits CDH1-mediated cell adhesion in process independent from Rho activation. Together with NAPA promotes CDH5 localization to plasma membrane. May play a role in the control of cell migration through the TOR signaling cascade. In Rattus norvegicus (Rat), this protein is Guanine nucleotide-binding protein subunit alpha-12 (Gna12).